Here is a 308-residue protein sequence, read N- to C-terminus: Ribosomal RNA large subunit methyltransferase F (308 aa).

It belongs to the methyltransferase superfamily. METTL16/RlmF family.

Its subcellular location is the cytoplasm. The catalysed reaction is adenosine(1618) in 23S rRNA + S-adenosyl-L-methionine = N(6)-methyladenosine(1618) in 23S rRNA + S-adenosyl-L-homocysteine + H(+). In terms of biological role, specifically methylates the adenine in position 1618 of 23S rRNA. The protein is Ribosomal RNA large subunit methyltransferase F of Salmonella arizonae (strain ATCC BAA-731 / CDC346-86 / RSK2980).